The following is a 782-amino-acid chain: Endonuclease MutS2 (782 aa).

336 to 343 (GPNTGGKT) provides a ligand contact to ATP. Residues 707–782 (LDLRGYRYDE…GFGVTVVEIK (76 aa)) form the Smr domain.

The protein belongs to the DNA mismatch repair MutS family. MutS2 subfamily. In terms of assembly, homodimer. Binds to stalled ribosomes, contacting rRNA.

In terms of biological role, endonuclease that is involved in the suppression of homologous recombination and thus may have a key role in the control of bacterial genetic diversity. Its function is as follows. Acts as a ribosome collision sensor, splitting the ribosome into its 2 subunits. Detects stalled/collided 70S ribosomes which it binds and splits by an ATP-hydrolysis driven conformational change. Acts upstream of the ribosome quality control system (RQC), a ribosome-associated complex that mediates the extraction of incompletely synthesized nascent chains from stalled ribosomes and their subsequent degradation. Probably generates substrates for RQC. The polypeptide is Endonuclease MutS2 (Staphylococcus saprophyticus subsp. saprophyticus (strain ATCC 15305 / DSM 20229 / NCIMB 8711 / NCTC 7292 / S-41)).